Consider the following 377-residue polypeptide: Phospho-N-acetylmuramoyl-pentapeptide-transferase (377 aa).

10 consecutive transmembrane segments (helical) span residues 27 to 47, 71 to 91, 94 to 114, 139 to 159, 182 to 202, 216 to 236, 252 to 272, 280 to 300, 305 to 325, and 354 to 374; these read TAFA…YVIE, GTPT…TLLW, LSDP…AIGF, ILAS…GSYS, VPHL…IVIV, GLAI…TYVS, MVGE…GFLW, IFMG…VAVV, LLLP…ILQV, and KVIV…LTTL.

The protein belongs to the glycosyltransferase 4 family. MraY subfamily. It depends on Mg(2+) as a cofactor.

Its subcellular location is the cell inner membrane. The catalysed reaction is UDP-N-acetyl-alpha-D-muramoyl-L-alanyl-gamma-D-glutamyl-meso-2,6-diaminopimeloyl-D-alanyl-D-alanine + di-trans,octa-cis-undecaprenyl phosphate = di-trans,octa-cis-undecaprenyl diphospho-N-acetyl-alpha-D-muramoyl-L-alanyl-D-glutamyl-meso-2,6-diaminopimeloyl-D-alanyl-D-alanine + UMP. It participates in cell wall biogenesis; peptidoglycan biosynthesis. Functionally, catalyzes the initial step of the lipid cycle reactions in the biosynthesis of the cell wall peptidoglycan: transfers peptidoglycan precursor phospho-MurNAc-pentapeptide from UDP-MurNAc-pentapeptide onto the lipid carrier undecaprenyl phosphate, yielding undecaprenyl-pyrophosphoryl-MurNAc-pentapeptide, known as lipid I. In Acidobacterium capsulatum (strain ATCC 51196 / DSM 11244 / BCRC 80197 / JCM 7670 / NBRC 15755 / NCIMB 13165 / 161), this protein is Phospho-N-acetylmuramoyl-pentapeptide-transferase.